Reading from the N-terminus, the 110-residue chain is MKMYRIRKDDKVMVIAGKDAGKIGKVLKILRKKDRVLVEKTNMVKRHMRPNPYAQQPGGIVEKEMPIHVSNVMVVCSACGKATRVGYKTIESEGKEKKVRFCKKCNEVME.

This sequence belongs to the universal ribosomal protein uL24 family. Part of the 50S ribosomal subunit.

Functionally, one of two assembly initiator proteins, it binds directly to the 5'-end of the 23S rRNA, where it nucleates assembly of the 50S subunit. One of the proteins that surrounds the polypeptide exit tunnel on the outside of the subunit. The polypeptide is Large ribosomal subunit protein uL24 (Desulfovibrio desulfuricans (strain ATCC 27774 / DSM 6949 / MB)).